The chain runs to 879 residues: MKYLTSAQVRQMFLDFFKEKGHDVEPSASLVPHDDPSLLWINSGVATLKKYFDGRVIPENPRITNAQKSIRTNDIENVGKTARHHTFFEMLGNFSIGDYFKEEAIEWAWEFLTSEKWIGFDKEKLSVTVHPEDDEAYSYWKEKIGIPEERIIRLEGNFWDIGEGPSGPNTEIFYDRGPEYGDQPNDPELYPGGENDRYLEVWNLVFSQFNHNPDGSYTPLPKKNIDTGMGLERMVSVIQNVPTNFETDLFMPIIRATEKISGTEYGSHHEADVSFKVIADHIRTVTFAIGDGALPSNEGRGYVLRRLLRRAVRYAKQIGIDRPFMYELVPVVGDIMVDFYPEVKEKAAFIQKVVKTEEERFHETLNEGLSILEKVIDKAKSEGASTISGSDVFRLYDTYGFPVDLTEEYVEEQGLQVDLDGFEAEMERQRERARTARQQAGSMQVQDEVLGQITVDSTFIGYKQLSTETTIETIVLDKTVADYVGAGQEAKVILKETPFYAESGGQVADKGIIRGANGFAVVSDVQKAPNGQHLHTVIVKEGTLQVNDQVQAIVEETERSGIVKNHTATHLLHRALKDVLGEHVNQAGSLVSEERLRFDFSHFGQVTDEEKEKIERIVNEKIWQAIKVNISTKTLDEAKAIGAMALFGEKYGDIVRVVEVGDYSIELCGGCHVTNTSEIGLFKIVSESGIGAGVRRIEAVTGKEAFLFMAKQLDLLKETAATVKAKNVKDVPVRVEALQQQIRELQRENESLNAKLGNMEAGSLVNEVQKIEGVPVLAKAISGADMDGLRSIVDKLKQEIPSVVIVLGTASEGKVNIVAGVTKDLINKGYHAGKLVKEVATRCGGGGGGRPDMAQAGGKQPEKLQDALSFVYEYVKSIS.

Zn(2+) is bound by residues His-566, His-570, Cys-668, and His-672.

This sequence belongs to the class-II aminoacyl-tRNA synthetase family. Zn(2+) serves as cofactor.

The protein resides in the cytoplasm. It carries out the reaction tRNA(Ala) + L-alanine + ATP = L-alanyl-tRNA(Ala) + AMP + diphosphate. Catalyzes the attachment of alanine to tRNA(Ala) in a two-step reaction: alanine is first activated by ATP to form Ala-AMP and then transferred to the acceptor end of tRNA(Ala). Also edits incorrectly charged Ser-tRNA(Ala) and Gly-tRNA(Ala) via its editing domain. This Halalkalibacterium halodurans (strain ATCC BAA-125 / DSM 18197 / FERM 7344 / JCM 9153 / C-125) (Bacillus halodurans) protein is Alanine--tRNA ligase.